We begin with the raw amino-acid sequence, 504 residues long: Anaerobic nitric oxide reductase transcription regulator NorR (504 aa).

Position 57 is a 4-aspartylphosphate (Asp57). The Sigma-54 factor interaction domain occupies 187 to 416 (MIGLSPGMMQ…LEHAIHRAVV (230 aa)). Residues 215–222 (GETGTGKE) and 278–287 (ADNGTLFLDE) contribute to the ATP site. A DNA-binding region (H-T-H motif) is located at residues 479–498 (WAACARALEMDVANLHRLAK).

Its pathway is nitrogen metabolism; nitric oxide reduction. In terms of biological role, required for the expression of anaerobic nitric oxide (NO) reductase, acts as a transcriptional activator for at least the norVW operon. Activation also requires sigma-54. The chain is Anaerobic nitric oxide reductase transcription regulator NorR from Enterobacter sp. (strain 638).